Here is a 445-residue protein sequence, read N- to C-terminus: Chromosome partition protein MukF (445 aa).

The segment at 213-241 (LSETSSTLRELQDTLQAASDELQTQILDI) is leucine-zipper.

This sequence belongs to the MukF family. In terms of assembly, interacts, and probably forms a ternary complex, with MukE and MukB via its C-terminal region. The complex formation is stimulated by calcium or magnesium. It is required for an interaction between MukE and MukB.

The protein resides in the cytoplasm. Its subcellular location is the nucleoid. Functionally, involved in chromosome condensation, segregation and cell cycle progression. May participate in facilitating chromosome segregation by condensation DNA from both sides of a centrally located replisome during cell division. Not required for mini-F plasmid partitioning. Probably acts via its interaction with MukB and MukE. Overexpression results in anucleate cells. It has a calcium binding activity. The chain is Chromosome partition protein MukF from Vibrio parahaemolyticus serotype O3:K6 (strain RIMD 2210633).